Consider the following 963-residue polypeptide: Exportin-T (963 aa).

Residue Met-1 is modified to N-acetylmethionine. Position 635 is an N6-acetyllysine (Lys-635).

It belongs to the exportin family. Found in a complex with XPOT, Ran and tRNA. Probably found in a complex with nucleoporins. Interacts with Ran and tRNA in a GTP-dependent manner.

It is found in the nucleus. The protein localises to the cytoplasm. Functionally, mediates the nuclear export of aminoacylated tRNAs. In the nucleus binds to tRNA and to the GTPase Ran in its active GTP-bound form. Docking of this trimeric complex to the nuclear pore complex (NPC) is mediated through binding to nucleoporins. Upon transit of a nuclear export complex into the cytoplasm, disassembling of the complex and hydrolysis of Ran-GTP to Ran-GDP (induced by RANBP1 and RANGAP1, respectively) cause release of the tRNA from the export receptor. XPOT then return to the nuclear compartment and mediate another round of transport. The directionality of nuclear export is thought to be conferred by an asymmetric distribution of the GTP- and GDP-bound forms of Ran between the cytoplasm and nucleus. The polypeptide is Exportin-T (Xpot) (Mus musculus (Mouse)).